The chain runs to 249 residues: 5'-nucleotidase SurE (249 aa).

Residues aspartate 8, aspartate 9, serine 39, and asparagine 91 each contribute to the a divalent metal cation site.

This sequence belongs to the SurE nucleotidase family. A divalent metal cation serves as cofactor.

The protein resides in the cytoplasm. It carries out the reaction a ribonucleoside 5'-phosphate + H2O = a ribonucleoside + phosphate. Nucleotidase that shows phosphatase activity on nucleoside 5'-monophosphates. This chain is 5'-nucleotidase SurE, found in Pseudomonas putida (strain ATCC 47054 / DSM 6125 / CFBP 8728 / NCIMB 11950 / KT2440).